Consider the following 124-residue polypeptide: Small ribosomal subunit protein bS6 (124 aa).

The disordered stretch occupies residues 96 to 124; sequence ETGPSPMMKEVQREEAKKAAAAQPAEAQA. Residues 114-124 are compositionally biased toward low complexity; the sequence is AAAAQPAEAQA.

This sequence belongs to the bacterial ribosomal protein bS6 family.

In terms of biological role, binds together with bS18 to 16S ribosomal RNA. This chain is Small ribosomal subunit protein bS6, found in Burkholderia orbicola (strain MC0-3).